The primary structure comprises 216 residues: uncharacterized protein (216 aa).

This is an uncharacterized protein from Caenorhabditis elegans.